A 239-amino-acid chain; its full sequence is MSNKKDIAVKNSGGKKIREAREKVKSDTLYNLTNAVERLKSASYVKFDPTLEIVMKLGIDPRHSDQMIRGVVNLPAGTGKTVRVAVICKAERVEEAKSAGADLVGSTSIIDEIKAGKINFDVCIATPDMMAAIGSVARILGPKGLMPNPKLGTVTLDIKNAIKNAKSGQVEYRAEKAGIIHAGLGKLSFSDQDLLQNLNEFIEAVIKAKPAGLKGSYLKAMYLSSTMGASVQIDLTSIA.

The protein belongs to the universal ribosomal protein uL1 family. In terms of assembly, part of the 50S ribosomal subunit.

Binds directly to 23S rRNA. The L1 stalk is quite mobile in the ribosome, and is involved in E site tRNA release. Its function is as follows. Protein L1 is also a translational repressor protein, it controls the translation of the L11 operon by binding to its mRNA. The polypeptide is Large ribosomal subunit protein uL1 (Rickettsia canadensis (strain McKiel)).